Consider the following 133-residue polypeptide: Large ribosomal subunit protein bL19 (133 aa).

Belongs to the bacterial ribosomal protein bL19 family.

Functionally, this protein is located at the 30S-50S ribosomal subunit interface and may play a role in the structure and function of the aminoacyl-tRNA binding site. This chain is Large ribosomal subunit protein bL19, found in Sulfurihydrogenibium sp. (strain YO3AOP1).